A 376-amino-acid polypeptide reads, in one-letter code: Homeobox protein extradenticle (376 aa).

The disordered stretch occupies residues 1–37 (MEDPNRMLAHTGGMMAPQGYGLSGQDDGQNAGSENEV). One can recognise a PBC domain in the interval 38–237 (RKQKDIGEIL…VMILRSRFLD (200 aa)). A PBC-A region spans residues 45–124 (EILQQIMSIS…EGVAGPEKGG (80 aa)). A PBC-B region spans residues 127-237 (AAAASAAAAS…VMILRSRFLD (111 aa)). The segment at residues 238-300 (ARRKRRNFSK…NKRIRYKKNI (63 aa)) is a DNA-binding region (homeobox; TALE-type). The segment covering 318–335 (ASPYSMAGPPSGTTTPMM) has biased composition (low complexity). Residues 318–376 (ASPYSMAGPPSGTTTPMMSPAPPQDSMGYPMGSGGYDQQQPYDNSMGGYDPNLHQDLSP) are disordered.

This sequence belongs to the TALE/PBX homeobox family. As to quaternary structure, interacts with Ubx and hth. In terms of tissue distribution, prior to full germband retraction it is ubiquitously present, after germband retraction, mostly present in the anterior portion of the ventral nerve cord.

Its subcellular location is the nucleus. In terms of biological role, transcription factor which acts with the selector homeodomain proteins altering the regulation of downstream target genes such as wingless (wg), teashirt (tsh) and decapentaplegic (dpp), thus affecting segmental identity. Delimits the eye field and prevent inappropriate eye development. Required for proper localization of chordotonal organs within the peripheral nervous system. The sequence is that of Homeobox protein extradenticle (exd) from Drosophila melanogaster (Fruit fly).